The sequence spans 235 residues: Calcium-activated potassium channel subunit beta-2 (235 aa).

Residues 1–45 (MFIWTSGRTSSSYRQDEKRNIYQKIRDHDLLDKRKTVTALKAGED) are ball and chain. Over 1–46 (MFIWTSGRTSSSYRQDEKRNIYQKIRDHDLLDKRKTVTALKAGEDR) the chain is Cytoplasmic. A helical membrane pass occupies residues 47-67 (AILLGLAMMVCSIMMYFLLGI). At 68-194 (TLLRSYMQSV…VILTKLYSSN (127 aa)) the chain is on the extracellular side. 3 N-linked (GlcNAc...) asparagine glycosylation sites follow: Asn88, Asn96, and Asn119. Residues 195 to 215 (VLFHSLFWPTCMMAGGVAIVA) form a helical membrane-spanning segment. Residues 216 to 235 (MVKLTQYLSLLCERIQRINR) are Cytoplasmic-facing.

The protein belongs to the KCNMB (TC 8.A.14.1) family. KCNMB2 subfamily. Interacts with KCNMA1 tetramer. There are probably 4 molecules of KCMNB2 per KCNMA1 tetramer. N-glycosylated.

The protein resides in the membrane. Functionally, regulatory subunit of the calcium activated potassium KCNMA1 (maxiK) channel. Modulates the calcium sensitivity and gating kinetics of KCNMA1, thereby contributing to KCNMA1 channel diversity. Acts as a negative regulator that confers rapid and complete inactivation of KCNMA1 channel complex. This chain is Calcium-activated potassium channel subunit beta-2 (Kcnmb2), found in Mus musculus (Mouse).